A 465-amino-acid chain; its full sequence is ATP synthase subunit beta 2 (465 aa).

148–155 (GGAGVGKT) provides a ligand contact to ATP.

It belongs to the ATPase alpha/beta chains family. As to quaternary structure, F-type ATPases have 2 components, CF(1) - the catalytic core - and CF(0) - the membrane proton channel. CF(1) has five subunits: alpha(3), beta(3), gamma(1), delta(1), epsilon(1). CF(0) has three main subunits: a(1), b(2) and c(9-12). The alpha and beta chains form an alternating ring which encloses part of the gamma chain. CF(1) is attached to CF(0) by a central stalk formed by the gamma and epsilon chains, while a peripheral stalk is formed by the delta and b chains.

The protein resides in the cell inner membrane. It catalyses the reaction ATP + H2O + 4 H(+)(in) = ADP + phosphate + 5 H(+)(out). Its function is as follows. Produces ATP from ADP in the presence of a proton gradient across the membrane. The catalytic sites are hosted primarily by the beta subunits. This Psychromonas ingrahamii (strain DSM 17664 / CCUG 51855 / 37) protein is ATP synthase subunit beta 2.